The chain runs to 436 residues: GTPase Der (436 aa).

EngA-type G domains follow at residues 4 to 167 and 175 to 351; these read PTVA…PVEE and IRFS…ESQN. GTP contacts are provided by residues 10-17, 57-61, 119-122, 181-188, 229-233, and 294-297; these read GRPNVGKS, DTGGI, NKVD, DTAGM, and NKWD. Residues 352-436 enclose the KH-like domain; sequence KRIPSAVLND…PINLIARKRK (85 aa).

This sequence belongs to the TRAFAC class TrmE-Era-EngA-EngB-Septin-like GTPase superfamily. EngA (Der) GTPase family. In terms of assembly, associates with the 50S ribosomal subunit.

Its function is as follows. GTPase that plays an essential role in the late steps of ribosome biogenesis. This chain is GTPase Der, found in Streptococcus agalactiae serotype III (strain NEM316).